The sequence spans 331 residues: Malate dehydrogenase (331 aa).

14–20 (GAAGSIG) serves as a coordination point for NAD(+). Residues Arg-95 and Arg-101 each coordinate substrate. NAD(+)-binding positions include Asn-108, Gln-115, and 132-134 (VGN). Asn-134 and Arg-165 together coordinate substrate. His-190 functions as the Proton acceptor in the catalytic mechanism.

It belongs to the LDH/MDH superfamily. MDH type 2 family.

The enzyme catalyses (S)-malate + NAD(+) = oxaloacetate + NADH + H(+). Catalyzes the reversible oxidation of malate to oxaloacetate. The sequence is that of Malate dehydrogenase from Rhodococcus jostii (strain RHA1).